A 274-amino-acid polypeptide reads, in one-letter code: Urease accessory protein UreD (274 aa).

It belongs to the UreD family. As to quaternary structure, ureD, UreF and UreG form a complex that acts as a GTP-hydrolysis-dependent molecular chaperone, activating the urease apoprotein by helping to assemble the nickel containing metallocenter of UreC. The UreE protein probably delivers the nickel.

The protein resides in the cytoplasm. Required for maturation of urease via the functional incorporation of the urease nickel metallocenter. The chain is Urease accessory protein UreD from Klebsiella pneumoniae subsp. pneumoniae (strain ATCC 700721 / MGH 78578).